The primary structure comprises 157 residues: 2-C-methyl-D-erythritol 2,4-cyclodiphosphate synthase (157 aa).

A divalent metal cation-binding residues include D8 and H10. Residues 8-10 (DVH) and 34-35 (HS) each bind 4-CDP-2-C-methyl-D-erythritol 2-phosphate. An a divalent metal cation-binding site is contributed by H42. 4-CDP-2-C-methyl-D-erythritol 2-phosphate-binding positions include 56 to 58 (DIG), 61 to 65 (FPDTD), 100 to 106 (AQAPKMA), 132 to 135 (TTTE), F139, and R142.

It belongs to the IspF family. Homotrimer. A divalent metal cation is required as a cofactor.

The enzyme catalyses 4-CDP-2-C-methyl-D-erythritol 2-phosphate = 2-C-methyl-D-erythritol 2,4-cyclic diphosphate + CMP. It participates in isoprenoid biosynthesis; isopentenyl diphosphate biosynthesis via DXP pathway; isopentenyl diphosphate from 1-deoxy-D-xylulose 5-phosphate: step 4/6. In terms of biological role, involved in the biosynthesis of isopentenyl diphosphate (IPP) and dimethylallyl diphosphate (DMAPP), two major building blocks of isoprenoid compounds. Catalyzes the conversion of 4-diphosphocytidyl-2-C-methyl-D-erythritol 2-phosphate (CDP-ME2P) to 2-C-methyl-D-erythritol 2,4-cyclodiphosphate (ME-CPP) with a corresponding release of cytidine 5-monophosphate (CMP). The chain is 2-C-methyl-D-erythritol 2,4-cyclodiphosphate synthase from Pseudomonas syringae pv. syringae (strain B728a).